Reading from the N-terminus, the 215-residue chain is uncharacterized protein (215 aa).

The next 5 helical transmembrane spans lie at 9–29 (WTFY…TIEG), 50–70 (LTVG…TSLF), 77–97 (IGAL…NFIL), 107–127 (IIVF…YVSA), and 160–180 (ILFA…LTAI).

It is found in the cell membrane. This is an uncharacterized protein from Bacillus subtilis (strain 168).